Reading from the N-terminus, the 465-residue chain is Cysteine--tRNA ligase (465 aa).

Residue Cys-27 coordinates Zn(2+). The 'HIGH' region motif lies at 29–39 (PTVYDEVHIGH). Residues Cys-204, His-229, and Glu-233 each coordinate Zn(2+). Residues 261-265 (KMSKS) carry the 'KMSKS' region motif. Position 264 (Lys-264) interacts with ATP.

It belongs to the class-I aminoacyl-tRNA synthetase family. The cofactor is Zn(2+).

The protein localises to the cytoplasm. It catalyses the reaction tRNA(Cys) + L-cysteine + ATP = L-cysteinyl-tRNA(Cys) + AMP + diphosphate. The chain is Cysteine--tRNA ligase from Metallosphaera sedula (strain ATCC 51363 / DSM 5348 / JCM 9185 / NBRC 15509 / TH2).